The primary structure comprises 611 residues: Threonine--tRNA ligase (611 aa).

Residues 1–27 (MAGPEPEPVSSAAATTPAPSAPVVLPK) are disordered. Residues 8–24 (PVSSAAATTPAPSAPVV) are compositionally biased toward low complexity. Positions 209-502 (DHRRIGKDLD…MTENYAGDYP (294 aa)) are catalytic. Residues C302, H353, and H479 each coordinate Zn(2+).

The protein belongs to the class-II aminoacyl-tRNA synthetase family. Homodimer. The cofactor is Zn(2+).

The protein resides in the cytoplasm. It catalyses the reaction tRNA(Thr) + L-threonine + ATP = L-threonyl-tRNA(Thr) + AMP + diphosphate + H(+). Functionally, catalyzes the attachment of threonine to tRNA(Thr) in a two-step reaction: L-threonine is first activated by ATP to form Thr-AMP and then transferred to the acceptor end of tRNA(Thr). Also edits incorrectly charged L-seryl-tRNA(Thr). The protein is Threonine--tRNA ligase of Synechococcus sp. (strain CC9605).